The chain runs to 108 residues: Small ribosomal subunit protein uS17 (108 aa).

This sequence belongs to the universal ribosomal protein uS17 family. In terms of assembly, part of the 30S ribosomal subunit.

Its function is as follows. One of the primary rRNA binding proteins, it binds specifically to the 5'-end of 16S ribosomal RNA. The sequence is that of Small ribosomal subunit protein uS17 from Methanospirillum hungatei JF-1 (strain ATCC 27890 / DSM 864 / NBRC 100397 / JF-1).